The primary structure comprises 529 residues: uncharacterized protein (529 aa).

The Radical SAM core domain occupies 157 to 410; that stretch reads DFPHIICEIE…FKNRVRENID (254 aa). Residues C171, C176, and C179 each contribute to the [4Fe-4S] cluster site.

It depends on [4Fe-4S] cluster as a cofactor.

This is an uncharacterized protein from Archaeoglobus fulgidus (strain ATCC 49558 / DSM 4304 / JCM 9628 / NBRC 100126 / VC-16).